The following is a 122-amino-acid chain: MSLTNEQIVDAIAEKSLMEVMELVKAIEEKFGVSAAAPVAVAAAAGPAAAVEEQTEFTVTLKSAGDKKVEVIKAVRAITGLGLKEAKDLAEAGGVLKDAASKDEAEKMKKDLEAAGATVEVK.

Belongs to the bacterial ribosomal protein bL12 family. In terms of assembly, homodimer. Part of the ribosomal stalk of the 50S ribosomal subunit. Forms a multimeric L10(L12)X complex, where L10 forms an elongated spine to which 2 to 4 L12 dimers bind in a sequential fashion. Binds GTP-bound translation factors.

Its function is as follows. Forms part of the ribosomal stalk which helps the ribosome interact with GTP-bound translation factors. Is thus essential for accurate translation. The protein is Large ribosomal subunit protein bL12 of Stenotrophomonas maltophilia (strain R551-3).